We begin with the raw amino-acid sequence, 116 residues long: MKTIIVFLSLLVLATKFGDANEGVNQEQMKEVIQNEFREDFLNEMAAMSLLQQLEAIESTLLEKEADRNSRQKRCNGNNVPCGPDHPPCCSGLSCEKTFGYGWWYKSPYCVRPSKG.

Residues 1-20 (MKTIIVFLSLLVLATKFGDA) form the signal peptide. Residues 21–74 (NEGVNQEQMKEVIQNEFREDFLNEMAAMSLLQQLEAIESTLLEKEADRNSRQKR) constitute a propeptide that is removed on maturation. 3 cysteine pairs are disulfide-bonded: Cys75–Cys90, Cys82–Cys95, and Cys89–Cys110.

It belongs to the neurotoxin 14 (magi-1) family. 06 (ICK-Trit) subfamily. As to expression, expressed by the venom gland.

It localises to the secreted. Ion channel inhibitor. The polypeptide is U16-barytoxin-Tl1d (Trittame loki (Brush-footed trapdoor spider)).